Reading from the N-terminus, the 257-residue chain is NAD kinase (257 aa).

The Proton acceptor role is filled by Asp-46. NAD(+)-binding positions include 46–47, 116–117, Asp-146, Ala-154, and 157–162; these read DG, NE, and TAYNLS.

It belongs to the NAD kinase family. It depends on a divalent metal cation as a cofactor.

Its subcellular location is the cytoplasm. The enzyme catalyses NAD(+) + ATP = ADP + NADP(+) + H(+). Functionally, involved in the regulation of the intracellular balance of NAD and NADP, and is a key enzyme in the biosynthesis of NADP. Catalyzes specifically the phosphorylation on 2'-hydroxyl of the adenosine moiety of NAD to yield NADP. This Mesorhizobium japonicum (strain LMG 29417 / CECT 9101 / MAFF 303099) (Mesorhizobium loti (strain MAFF 303099)) protein is NAD kinase.